We begin with the raw amino-acid sequence, 138 residues long: Large ribosomal subunit protein bL19 (138 aa).

Belongs to the bacterial ribosomal protein bL19 family.

Functionally, this protein is located at the 30S-50S ribosomal subunit interface and may play a role in the structure and function of the aminoacyl-tRNA binding site. The chain is Large ribosomal subunit protein bL19 from Rickettsia canadensis (strain McKiel).